We begin with the raw amino-acid sequence, 500 residues long: Cytochrome P450 2D26 (500 aa).

A Phosphoserine modification is found at serine 249. Cysteine 446 lines the heme pocket.

It belongs to the cytochrome P450 family. The cofactor is heme.

The protein resides in the endoplasmic reticulum membrane. It is found in the microsome membrane. It catalyses the reaction an organic molecule + reduced [NADPH--hemoprotein reductase] + O2 = an alcohol + oxidized [NADPH--hemoprotein reductase] + H2O + H(+). Functionally, cytochromes P450 are a group of heme-thiolate monooxygenases. In liver microsomes, this enzyme is involved in an NADPH-dependent electron transport pathway. It oxidizes a variety of structurally unrelated compounds, including steroids, fatty acids, and xenobiotics. The sequence is that of Cytochrome P450 2D26 (Cyp2d26) from Rattus norvegicus (Rat).